The following is a 443-amino-acid chain: Ribosomal protein uS12 methylthiotransferase RimO (443 aa).

The region spanning 5 to 115 is the MTTase N-terminal domain; it reads PNIGFISLGC…VMKHVHKYVP (111 aa). 6 residues coordinate [4Fe-4S] cluster: C14, C50, C79, C147, C151, and C154. Positions 133–374 constitute a Radical SAM core domain; the sequence is LTPKHYAYLK…MQVQQRISAA (242 aa). The region spanning 377 to 443 is the TRAM domain; the sequence is QQKVGKTLAV…ADEYDLWGTC (67 aa).

This sequence belongs to the methylthiotransferase family. RimO subfamily. The cofactor is [4Fe-4S] cluster.

The protein resides in the cytoplasm. It carries out the reaction L-aspartate(89)-[ribosomal protein uS12]-hydrogen + (sulfur carrier)-SH + AH2 + 2 S-adenosyl-L-methionine = 3-methylsulfanyl-L-aspartate(89)-[ribosomal protein uS12]-hydrogen + (sulfur carrier)-H + 5'-deoxyadenosine + L-methionine + A + S-adenosyl-L-homocysteine + 2 H(+). In terms of biological role, catalyzes the methylthiolation of an aspartic acid residue of ribosomal protein uS12. The polypeptide is Ribosomal protein uS12 methylthiotransferase RimO (Actinobacillus pleuropneumoniae serotype 5b (strain L20)).